Here is an 88-residue protein sequence, read N- to C-terminus: Large ribosomal subunit protein eL20 (88 aa).

This sequence belongs to the eukaryotic ribosomal protein eL20 family. As to quaternary structure, part of the 50S ribosomal subunit. Binds 23S rRNA.

This Aeropyrum pernix (strain ATCC 700893 / DSM 11879 / JCM 9820 / NBRC 100138 / K1) protein is Large ribosomal subunit protein eL20.